The sequence spans 2185 residues: Genome polyprotein (2185 aa).

Gly2 is lipidated: N-myristoyl glycine; by host. The Cytoplasmic segment spans residues 2–1495 (GAQVSTQKTG…HVSRAFICLQ (1494 aa)). The amphipathic alpha-helix stretch occupies residues 568 to 584 (FFQGPVEDAITAAIGRV). Active-site for protease 2A activity residues include His872 and Asp890. Residues Cys907 and Cys909 each contribute to the Zn(2+) site. Cys961 functions as the For protease 2A activity in the catalytic mechanism. 2 residues coordinate Zn(2+): Cys967 and His969. Residues 1101–1173 (NNSWLKKFTE…EQSAPSQSDQ (73 aa)) form a membrane-binding region. Positions 1101 to 1239 (NNSWLKKFTE…SPGAGKSVAT (139 aa)) are oligomerization. Residues 1122 to 1126 (AVKIQ) are RNA-binding. The 157-residue stretch at 1205-1361 (EKKMSNYIQF…SMYSQNGKIN (157 aa)) folds into the SF3 helicase domain. Residues Cys1369, Cys1381, and Cys1386 each contribute to the Zn(2+) site. Residues 1369–1386 (CDDECCPVNFKKCCPLVC) form a C4-type; degenerate zinc finger. The tract at residues 1413 to 1420 (EYNHRHSV) is RNA-binding. The segment at 1424–1429 (LEALFQ) is oligomerization. Residues 1496–1511 (ALTTFVSVAGIIYIIY) lie within the membrane without spanning it. Over 1512–2185 (KLFAGFQGAY…TLRRKWLDSF (674 aa)) the chain is Cytoplasmic. The residue at position 1521 (Tyr1521) is an O-(5'-phospho-RNA)-tyrosine. A Peptidase C3 domain is found at 1541 to 1719 (GPAFEFAVAM…FSAALLKHYF (179 aa)). Active-site for protease 3C activity residues include His1580, Glu1611, and Cys1687. Residues 1950-2066 (GHLIAFDYSG…SYPWPIDASL (117 aa)) enclose the RdRp catalytic domain. The Mg(2+) site is built by Asp1956 and Asp2052.

This sequence belongs to the picornaviruses polyprotein family. In terms of assembly, interacts with capsid protein VP1 and capsid protein VP3 to form heterotrimeric protomers. Interacts with capsid protein VP0, and capsid protein VP3 to form heterotrimeric protomers. Five protomers subsequently associate to form pentamers which serve as building blocks for the capsid. Interacts with capsid protein VP2, capsid protein VP3 and capsid protein VP4 following cleavage of capsid protein VP0. Interacts with host CD55. Interacts with host CXADR. As to quaternary structure, interacts with capsid protein VP1 and capsid protein VP3 in the mature capsid. In terms of assembly, interacts with capsid protein VP0 and capsid protein VP1 to form heterotrimeric protomers. Five protomers subsequently associate to form pentamers which serve as building blocks for the capsid. Interacts with capsid protein VP4 in the mature capsid. Interacts with protein 2C; this interaction may be important for virion morphogenesis. Interacts with capsid protein VP1 and capsid protein VP3. As to quaternary structure, homodimer. In terms of assembly, homohexamer; forms a hexameric ring structure with 6-fold symmetry characteristic of AAA+ ATPases. Interacts (via N-terminus) with host RTN3 (via reticulon domain); this interaction is important for viral replication. Interacts with capsid protein VP3; this interaction may be important for virion morphogenesis. Interacts with protein 3CD. As to quaternary structure, homodimer. Interacts with host GBF1. Interacts (via GOLD domain) with host ACBD3 (via GOLD domain); this interaction allows the formation of a viral protein 3A/ACBD3 heterotetramer with a 2:2 stoichiometry, which will stimulate the recruitment of host PI4KB in order to synthesize PI4P at the viral RNA replication sites. In terms of assembly, interacts with RNA-directed RNA polymerase. Interacts with host TICAM1 (via C-terminus). As to quaternary structure, interacts with protein 3AB and with RNA-directed RNA polymerase. In terms of assembly, interacts with Viral protein genome-linked and with protein 3CD. The cofactor is Mg(2+). Specific enzymatic cleavages in vivo by the viral proteases yield processing intermediates and the mature proteins. Post-translationally, myristoylation is required for the formation of pentamers during virus assembly. Further assembly of 12 pentamers and a molecule of genomic RNA generates the provirion. In terms of processing, during virion maturation, immature virions are rendered infectious following cleavage of VP0 into VP4 and VP2. This maturation seems to be an autocatalytic event triggered by the presence of RNA in the capsid and it is followed by a conformational change infectious virion. Myristoylation is required during RNA encapsidation and formation of the mature virus particle. Post-translationally, VPg is uridylylated by the polymerase into VPg-pUpU. This acts as a nucleotide-peptide primer for the genomic RNA replication.

It is found in the virion. Its subcellular location is the host cytoplasm. The protein localises to the host cytoplasmic vesicle membrane. It localises to the host nucleus. The enzyme catalyses a ribonucleoside 5'-triphosphate + H2O = a ribonucleoside 5'-diphosphate + phosphate + H(+). It catalyses the reaction Selective cleavage of Tyr-|-Gly bond in the picornavirus polyprotein.. It carries out the reaction RNA(n) + a ribonucleoside 5'-triphosphate = RNA(n+1) + diphosphate. The catalysed reaction is Selective cleavage of Gln-|-Gly bond in the poliovirus polyprotein. In other picornavirus reactions Glu may be substituted for Gln, and Ser or Thr for Gly.. With respect to regulation, replication or transcription is subject to high level of random mutations by the nucleotide analog ribavirin. In terms of biological role, forms an icosahedral capsid of pseudo T=3 symmetry with capsid proteins VP2 and VP3. The capsid is 300 Angstroms in diameter, composed of 60 copies of each capsid protein and enclosing the viral positive strand RNA genome. Capsid protein VP1 mainly forms the vertices of the capsid. Capsid protein VP1 interacts with host CD55 and CXADR to provide virion attachment to target host cells. This attachment induces virion internalization. Tyrosine kinases are probably involved in the entry process. After binding to its receptor, the capsid undergoes conformational changes. Capsid protein VP1 N-terminus (that contains an amphipathic alpha-helix) and capsid protein VP4 are externalized. Together, they shape a pore in the host membrane through which viral genome is translocated to host cell cytoplasm. Functionally, forms an icosahedral capsid of pseudo T=3 symmetry with capsid proteins VP2 and VP3. The capsid is 300 Angstroms in diameter, composed of 60 copies of each capsid protein and enclosing the viral positive strand RNA genome. Lies on the inner surface of the capsid shell. After binding to the host receptor, the capsid undergoes conformational changes. Capsid protein VP4 is released, Capsid protein VP1 N-terminus is externalized, and together, they shape a pore in the host membrane through which the viral genome is translocated into the host cell cytoplasm. Its function is as follows. Component of immature procapsids, which is cleaved into capsid proteins VP4 and VP2 after maturation. Allows the capsid to remain inactive before the maturation step. In terms of biological role, cysteine protease that cleaves viral polyprotein and specific host proteins. It is responsible for the autocatalytic cleavage between the P1 and P2 regions, which is the first cleavage occurring in the polyprotein. Also cleaves the host translation initiation factor EIF4G1, in order to shut down the capped cellular mRNA translation. Inhibits the host nucleus-cytoplasm protein and RNA trafficking by cleaving host members of the nuclear pores. Counteracts stress granule formation probably by antagonizing its assembly or promoting its dissassembly. Cleaves and inhibits host IFIH1/MDA5, thereby inhibiting the type-I IFN production and the establishment of the antiviral state. Cleaves and inhibits host MAVS, thereby inhibiting the type-I IFN production and the establishment of the antiviral state. Functionally, plays an essential role in the virus replication cycle by acting as a viroporin. Creates a pore in the host endoplasmic reticulum and as a consequence releases Ca2+ in the cytoplasm of infected cell. In turn, high levels of cytoplasmic calcium may trigger membrane trafficking and transport of viral ER-associated proteins to viroplasms, sites of viral genome replication. Induces and associates with structural rearrangements of intracellular membranes. Displays RNA-binding, nucleotide binding and NTPase activities. May play a role in virion morphogenesis and viral RNA encapsidation by interacting with the capsid protein VP3. Its function is as follows. Localizes the viral replication complex to the surface of membranous vesicles. Together with protein 3CD binds the Cis-Active RNA Element (CRE) which is involved in RNA synthesis initiation. Acts as a cofactor to stimulate the activity of 3D polymerase, maybe through a nucleid acid chaperone activity. In terms of biological role, localizes the viral replication complex to the surface of membranous vesicles. It inhibits host cell endoplasmic reticulum-to-Golgi apparatus transport and causes the disassembly of the Golgi complex, possibly through GBF1 interaction. This would result in depletion of MHC, trail receptors and IFN receptors at the host cell surface. Plays an essential role in viral RNA replication by recruiting ACBD3 and PI4KB at the viral replication sites, thereby allowing the formation of the rearranged membranous structures where viral replication takes place. Functionally, acts as a primer for viral RNA replication and remains covalently bound to viral genomic RNA. VPg is uridylylated prior to priming replication into VPg-pUpU. The oriI viral genomic sequence may act as a template for this. The VPg-pUpU is then used as primer on the genomic RNA poly(A) by the RNA-dependent RNA polymerase to replicate the viral genome. During genome replication, the VPg-RNA linkage is removed by the host TDP2, thereby accelerating replication. During the late stage of the replication cycle, host TDP2 is excluded from sites of viral RNA synthesis and encapsidation, allowing for the generation of progeny virions. Involved in the viral replication complex and viral polypeptide maturation. It exhibits protease activity with a specificity and catalytic efficiency that is different from protease 3C. Protein 3CD lacks polymerase activity. Protein 3CD binds to the 5'UTR of the viral genome. Its function is as follows. Major viral protease that mediates proteolytic processing of the polyprotein. Cleaves host EIF5B, contributing to host translation shutoff. Cleaves also host PABPC1, contributing to host translation shutoff. Cleaves and inhibits host RIGI, thereby inhibiting the type-I IFN production and the establishment of the antiviral state. Cleaves and inhibits host MAVS, thereby inhibiting the type-I IFN production and the establishment of the antiviral state. Cleaves and inhibits host TICAM1/TRIF, thereby inhibiting the type-I IFN production. Cleaves host NLRP1, triggers host N-glycine-mediated degradation of the autoinhibitory NLRP1 N-terminal fragment. Cleaves host transcription factor TFEB, thereby disrupting host lysosomal functions and enhancing viral infection. In terms of biological role, replicates the viral genomic RNA on the surface of intracellular membranes. May form linear arrays of subunits that propagate along a strong head-to-tail interaction called interface-I. Covalently attaches UMP to a tyrosine of VPg, which is used to prime RNA synthesis. The positive stranded RNA genome is first replicated at virus induced membranous vesicles, creating a dsRNA genomic replication form. This dsRNA is then used as template to synthesize positive stranded RNA genomes. ss(+)RNA genomes are either translated, replicated or encapsidated. This chain is Genome polyprotein, found in Coxsackievirus B3 (strain Nancy).